A 194-amino-acid chain; its full sequence is Metalloproteinase inhibitor 2 (194 aa).

Cysteine 1 serves as a coordination point for Zn(2+). Involved in metalloproteinase-binding regions lie at residues 1 to 4 and 69 to 70; these read CSCS and SA. Disulfide bonds link cysteine 1–cysteine 72, cysteine 3–cysteine 101, cysteine 13–cysteine 126, cysteine 128–cysteine 175, cysteine 133–cysteine 138, and cysteine 146–cysteine 167. In terms of domain architecture, NTR spans 1–126; that stretch reads CSCSPVHPQQ…SLNHRYQMGC (126 aa).

The protein belongs to the protease inhibitor I35 (TIMP) family. Interacts (via the C-terminal) with MMP2 (via the C-terminal PEX domain); the interaction inhibits the MMP2 activity. Post-translationally, the activity of TIMP2 is dependent on the presence of disulfide bonds.

Its subcellular location is the secreted. Its function is as follows. Complexes with metalloproteinases (such as collagenases) and irreversibly inactivates them by binding to their catalytic zinc cofactor. The protein is Metalloproteinase inhibitor 2 (TIMP2) of Oryctolagus cuniculus (Rabbit).